The sequence spans 307 residues: Homoserine kinase (307 aa).

Pro-95–Ser-105 contacts ATP.

This sequence belongs to the GHMP kinase family. Homoserine kinase subfamily.

It is found in the cytoplasm. It catalyses the reaction L-homoserine + ATP = O-phospho-L-homoserine + ADP + H(+). It participates in amino-acid biosynthesis; L-threonine biosynthesis; L-threonine from L-aspartate: step 4/5. In terms of biological role, catalyzes the ATP-dependent phosphorylation of L-homoserine to L-homoserine phosphate. The protein is Homoserine kinase of Corynebacterium aurimucosum (strain ATCC 700975 / DSM 44827 / CIP 107346 / CN-1) (Corynebacterium nigricans).